Here is a 397-residue protein sequence, read N- to C-terminus: Phosphoglycerate kinase (397 aa).

Substrate is bound by residues 22–24 (DYN), R38, 61–64 (HLGR), R119, and R152. Residues K203, G294, E325, and 351–354 (GGDT) each bind ATP.

Belongs to the phosphoglycerate kinase family. Monomer.

Its subcellular location is the cytoplasm. The enzyme catalyses (2R)-3-phosphoglycerate + ATP = (2R)-3-phospho-glyceroyl phosphate + ADP. It participates in carbohydrate degradation; glycolysis; pyruvate from D-glyceraldehyde 3-phosphate: step 2/5. This Aquifex aeolicus (strain VF5) protein is Phosphoglycerate kinase (pgk).